The primary structure comprises 299 residues: Transcription factor BHLH148 (299 aa).

A disordered region spans residues 90 to 127; it reads RMGGGGGGGEKGEGEEMEEEEEVPQRRRRGQGADVESS. Residues 102–111 show a composition bias toward acidic residues; that stretch reads EGEEMEEEEE. Residues 127 to 140 form a basic motif; degenerate region; that stretch reads SRGFRHMMRERQRR. Positions 127 to 176 constitute a bHLH domain; that stretch reads SRGFRHMMRERQRREKLSQSYADLYAMVSSRSKGDKNSIVQSAAIYIHEL. The helix-loop-helix motif stretch occupies residues 141–176; that stretch reads EKLSQSYADLYAMVSSRSKGDKNSIVQSAAIYIHEL. The interval 273–299 is disordered; it reads ERNQPDSDAPFPGSKGWTQTSHVQNVF. Over residues 288–299 the composition is skewed to polar residues; sequence GWTQTSHVQNVF.

Belongs to the bHLH protein family. In terms of assembly, interacts with TIFY10A/JAZ6, TIFY10B/JAZ7, TIFY11A/JAZ9, TIFY11C/JAZ11, and TIFY11D/JAZ12.

The protein localises to the nucleus. In terms of biological role, may act on an initial response of jasmonate-regulated gene expression toward drought tolerance as part of a BHLH148-TIFY11D/JAZ12-COI1A complex. This is Transcription factor BHLH148 from Oryza sativa subsp. japonica (Rice).